A 148-amino-acid polypeptide reads, in one-letter code: Insoluble matrix shell protein 1 (148 aa).

The segment at 105-128 is disordered; it reads KSGRTEARNTDDSGDPIIDPRTAD.

In terms of tissue distribution, component of the acid-insoluble organic matrix of the calcified shell.

It localises to the secreted. The polypeptide is Insoluble matrix shell protein 1 (Ruditapes philippinarum (Japanese carpet shell)).